Reading from the N-terminus, the 36-residue chain is Photosystem I reaction center subunit VIII (36 aa).

The helical transmembrane segment at 10–30 (FVPLVGLVFSAIIMVLSFLYI) threads the bilayer.

It belongs to the PsaI family.

The protein localises to the plastid. It is found in the chloroplast thylakoid membrane. Its function is as follows. May help in the organization of the PsaL subunit. This is Photosystem I reaction center subunit VIII from Welwitschia mirabilis (Tree tumbo).